The following is a 664-amino-acid chain: MDNKLEKMKELVEELNQYAYEYYVLDNPSISDKEYDLKYDELVILEKKTEVTLPYSPTQRVGDKILGEFSKYTHKGRLWSLDKAQNMEQLIEWHNRNLKVIEQYNSMSEDKLPELRYIVTKKFDGLTVNCTYDENGILIKSATRGTGIIGEDITAQIKTIKTVPLKIKNNHVIEVHGEAIMTKTAFEEYNKAAQVPLKNLRNGAAGALRNLDIKETARRNLSAFFYDVGYNEGPEFKSYREMMNFIKNMGLPQDKYIKECTNMEEVEKEIEYIESIRGELDYDIDGAVIVVDDIKTREILGYTIKFPKWAIAYKFEAKEITTKLLDVEWNVGRSGRVTPTALLEPVELGGVTVKRATLNNMDDIKRKNVKLGAKVLVRRSNDVIPEIMGVVEESLEESKEIQAPDRCPYCNSHLVQNGVHYYCENTLSCKPQMVKSIVHFASREAMNIAGFSEKTAEQLFEKLDIKSIADLYKIKKEELLTLEKFKDKKSQNLIDAIQNSKNCDLASFIYALGIPNVGKKTANDLVMKFKTLESIKNTTIEQLVEVPDVGEIVAKSIYDFFEDEKVISNIEELLNLGVKPYYEEERIDENPFMDKTIVVTGSLNNYSRGEIKDKLQSLGAKVSSSVSKNTDYVLVGEKPGSKYEKAIELGVKVINEEEFSNKIK.

NAD(+) contacts are provided by residues 32–36 and 80–81; these read DKEYD and SL. Catalysis depends on Lys-122, which acts as the N6-AMP-lysine intermediate. The NAD(+) site is built by Arg-144, Glu-178, and Lys-314. Positions 407, 410, 423, and 429 each coordinate Zn(2+). In terms of domain architecture, BRCT spans 587–664; that stretch reads IDENPFMDKT…NEEEFSNKIK (78 aa).

It belongs to the NAD-dependent DNA ligase family. LigA subfamily. Requires Mg(2+) as cofactor. Mn(2+) serves as cofactor.

It catalyses the reaction NAD(+) + (deoxyribonucleotide)n-3'-hydroxyl + 5'-phospho-(deoxyribonucleotide)m = (deoxyribonucleotide)n+m + AMP + beta-nicotinamide D-nucleotide.. Functionally, DNA ligase that catalyzes the formation of phosphodiester linkages between 5'-phosphoryl and 3'-hydroxyl groups in double-stranded DNA using NAD as a coenzyme and as the energy source for the reaction. It is essential for DNA replication and repair of damaged DNA. The chain is DNA ligase from Clostridium botulinum (strain ATCC 19397 / Type A).